The primary structure comprises 1289 residues: uncharacterized protein (1289 aa).

An N-terminal signal peptide occupies residues 1–23 (MRKYTVIASILLSFLSVLSGGHH). The 137-residue stretch at 141–277 (EGYQADLAHI…VVISTNTGKD (137 aa)) folds into the LTD domain.

This is an uncharacterized protein from Bacillus subtilis (strain 168).